The sequence spans 606 residues: R-linalool synthase, chloroplastic (606 aa).

Residues 1 to 51 constitute a chloroplast transit peptide; the sequence is MCTIISVNHHHVAILSKPKVKLFHTKNKRSASINLPWSLSPSSSAASRPIS. 5 residues coordinate (2E)-geranyl diphosphate: Arg326, Asp363, Asp367, Arg504, and Asp507. Residues Asp363 and Asp367 each coordinate Mg(2+). The short motif at 363 to 367 is the DDXXD motif element; it reads DDVYD. The Mg(2+) site is built by Asp507, Thr511, and Glu515.

It belongs to the terpene synthase family. Tpsb subfamily. It depends on Mg(2+) as a cofactor. Mn(2+) is required as a cofactor.

Its subcellular location is the plastid. It localises to the chloroplast. It carries out the reaction (2E)-geranyl diphosphate + H2O = (R)-linalool + diphosphate. It participates in secondary metabolite biosynthesis; terpenoid biosynthesis. Its function is as follows. Monoterpene synthase that catalyzes the formation of (3R)-linalool from geranyl diphosphate, but not from farnesyl diphosphate or geranylgeranyl diphosphate. The chain is R-linalool synthase, chloroplastic from Mentha aquatica (Water mint).